Here is a 442-residue protein sequence, read N- to C-terminus: Trigger factor (442 aa).

A PPIase FKBP-type domain is found at 163-248 (YDRVTINYCI…IIKIEKKQEL (86 aa)).

It belongs to the FKBP-type PPIase family. Tig subfamily.

The protein localises to the cytoplasm. The catalysed reaction is [protein]-peptidylproline (omega=180) = [protein]-peptidylproline (omega=0). Involved in protein export. Acts as a chaperone by maintaining the newly synthesized protein in an open conformation. Functions as a peptidyl-prolyl cis-trans isomerase. The chain is Trigger factor from Buchnera aphidicola subsp. Acyrthosiphon pisum (strain 5A).